The chain runs to 361 residues: Mitochondrial import receptor subunit TOM40 homolog (361 aa).

Residues 1–10 (MGNVLAASSP) are compositionally biased toward low complexity. Residues 1 to 71 (MGNVLAASSP…TASASGAAED (71 aa)) are disordered. Residues 11-36 (PAGPPPPPAPALVGLPPPPPSPPGFT) show a composition bias toward pro residues. 2 stretches are compositionally biased toward low complexity: residues 37 to 52 (LPPLGGSLGAGTSTSR) and 59 to 71 (GAATASASGAAED).

This sequence belongs to the Tom40 family. In terms of assembly, forms part of the preprotein translocase complex of the outer mitochondrial membrane (TOM complex) which consists of at least 7 different proteins (TOMM5, TOMM6, TOMM7, TOMM20, TOMM22, TOMM40 and TOMM70). Interacts with mitochondrial targeting sequences. Interacts with TIMM29; linking the TIM22 complex to the TOM complex. Forms a complex with BCAP31 (via C-terminus) which mediates the translocation of components of the mitochondrial membrane respiratory chain NADH dehydrogenase (Complex I) from the cytosol to the mitochondria. Interacts (via N-terminus) with CYP1A1 (via mitochondrial targeting signal); this interaction is required for CYP1A1 translocation across the mitochondrial outer membrane.

It is found in the mitochondrion outer membrane. In terms of biological role, channel-forming protein essential for import of protein precursors into mitochondria. Plays a role in the assembly of the mitochondrial membrane respiratory chain NADH dehydrogenase (Complex I) by forming a complex with BCAP31 and mediating the translocation of Complex I components from the cytosol to the mitochondria. The protein is Mitochondrial import receptor subunit TOM40 homolog (TOMM40) of Homo sapiens (Human).